We begin with the raw amino-acid sequence, 311 residues long: Formimidoylglutamase (311 aa).

Mn(2+)-binding residues include histidine 122, aspartate 151, histidine 153, aspartate 155, cysteine 242, and aspartate 244.

Belongs to the arginase family. As to quaternary structure, homodimer. It depends on Mn(2+) as a cofactor.

It carries out the reaction N-formimidoyl-L-glutamate + H2O = formamide + L-glutamate. Its pathway is amino-acid degradation; L-histidine degradation into L-glutamate; L-glutamate from N-formimidoyl-L-glutamate (hydrolase route): step 1/1. Its function is as follows. Catalyzes the conversion of N-formimidoyl-L-glutamate to L-glutamate and formamide. The chain is Formimidoylglutamase from Pseudomonas aeruginosa (strain ATCC 15692 / DSM 22644 / CIP 104116 / JCM 14847 / LMG 12228 / 1C / PRS 101 / PAO1).